A 234-amino-acid polypeptide reads, in one-letter code: Glucosamine-6-phosphate deaminase (234 aa).

The active-site Proton acceptor; for enolization step is D62. N128 serves as the catalytic For ring-opening step. H130 (proton acceptor; for ring-opening step) is an active-site residue. E135 functions as the For ring-opening step in the catalytic mechanism.

This sequence belongs to the glucosamine/galactosamine-6-phosphate isomerase family. NagB subfamily.

It carries out the reaction alpha-D-glucosamine 6-phosphate + H2O = beta-D-fructose 6-phosphate + NH4(+). Its pathway is amino-sugar metabolism; N-acetylneuraminate degradation; D-fructose 6-phosphate from N-acetylneuraminate: step 5/5. Catalyzes the reversible isomerization-deamination of glucosamine 6-phosphate (GlcN6P) to form fructose 6-phosphate (Fru6P) and ammonium ion. This is Glucosamine-6-phosphate deaminase from Streptococcus pyogenes serotype M18 (strain MGAS8232).